The primary structure comprises 419 residues: Ribosome biogenesis protein WDR12 homolog (419 aa).

Residues 10-91 form a ubiquitin-like (UBL) domain region; the sequence is VQVHLKTKQE…EDAIDIEYVE (82 aa). WD repeat units lie at residues 103-140, 142-184, 191-230, 249-287, 289-328, 334-374, and 378-416; these read LHDDWVSAVKACGKWILTGCYDNTINIWTNKGKHKLTI, GHTA…NAVE, GHERGVDSVCVSPDAQRFATGSWDTMLKIWSAGLDDTSEG, GHRESISAVQWMDATTLVTGSWDHTLKVWDLQLEGIKTE, STNKSIFDASYSKLNRLIVTASADKNLRLYDARTNQGSVV, GHNA…APLY, and GHGEKVLDIDWSNPKYIVSGGADNTVRVFKSGKATIENM.

This sequence belongs to the WD repeat WDR12/YTM1 family.

The protein localises to the nucleus. The protein resides in the nucleolus. It is found in the nucleoplasm. In terms of biological role, required for maturation of ribosomal RNAs and formation of the large ribosomal subunit. This is Ribosome biogenesis protein WDR12 homolog from Drosophila virilis (Fruit fly).